The primary structure comprises 223 residues: Small ribosomal subunit protein uS3 (223 aa).

Residues 38 to 106 (IRKFLDEKLK…QVHINIVEIK (69 aa)) form the KH type-2 domain.

This sequence belongs to the universal ribosomal protein uS3 family. As to quaternary structure, part of the 30S ribosomal subunit. Forms a tight complex with proteins S10 and S14.

Its function is as follows. Binds the lower part of the 30S subunit head. Binds mRNA in the 70S ribosome, positioning it for translation. The polypeptide is Small ribosomal subunit protein uS3 (Lactobacillus delbrueckii subsp. bulgaricus (strain ATCC 11842 / DSM 20081 / BCRC 10696 / JCM 1002 / NBRC 13953 / NCIMB 11778 / NCTC 12712 / WDCM 00102 / Lb 14)).